A 54-amino-acid chain; its full sequence is Apelin receptor early endogenous ligand (54 aa).

An N-terminal signal peptide occupies residues 1 to 23 (MRFQPLFWVFFIFAMSLLFISEQ).

This sequence belongs to the Elabela/Toddler family. As to quaternary structure, interacts with APLNR. In terms of tissue distribution, expressed in the placenta. Expressed in syncytiotrophoblasts of the placenta labyrinth at 10.5 dpc. Expressed in placental chorionic trophoblasts (at protein level). Expressed in a small population of epiblast cells in the distal half of the embryo at 7 dpc. Expressed in newly formed definitive endoderm cells in the proximal half of the embryo, while it is not present in extra-embryonic endoderm at 7.5 dpc. This expression pattern then changes to the ventral aspect of the developing foregut pocket and the entire hindgut pocket at 8.5 dpc, before becoming restricted to the foregut overlying the heart and the posterior-most hindgut. Not detected in endothelial precursor cells of the yolk sac at 8 dpc. Expressed in extraembryonic tissues as well as in the chorion at 8.25 dpc. Expressed in endometrial stroma of the uterus of pregnant mice at 8.5 dpc. Expressed in the developing heart, caudal neural tube and trophobasts at 9 dpc. Expressed in the chorionic plate of the chorioallantoic placenta at 9 dpc. Expressed in the posterior half of the ventral neural tube at 9.25 dpc. Expressed in trophoblast cells at the periphery of the placenta at 9.5 dpc. Expressed in collecting ducts of the kidney of pregnant mice at 10.5 dpc. Expressed in the epicardium of the developing heart at 11.5 dpc. Expressed weakly in the adult heart. Expressed in endothelial cells and fibroblasts and weakly in cardiomyocytes.

It is found in the secreted. The protein resides in the extracellular space. Peptide hormone that functions as endogenous ligand for the G-protein-coupled apelin receptor (APLNR/APJ), that plays a role in the regulation of normal cardiovascular function and fluid homeostasis. Functions as a balanced agonist activating both G(i) protein pathway and beta-arrestin pathway of APLNR. Downstream G proteins activation, apelin can inhibit cAMP production and activate key intracellular effectors such as ERKs. On the other hand, APLNR activation induces beta-arrestin recruitment to the membrane leading to desensitization and internalization of the receptor. Required for mesendodermal differentiation, blood vessels formation and heart morphogenesis during early development and for adult cardiovascular homeostasis. Acts as a motogen by promoting mesendodermal cell migration during gastrulation by binding and activating APLNR. Acts as an early embryonic regulator of cellular movement with a role in migration and development of cardiac progenitor cells. May act as a chemoattractant for the activation of angioblast migration toward the embryonic midline, i.e. the position of the future vessel formation, during vasculogenesis. Positively regulates sinus venosus (SV)-derived endothelial cells migration into the developing heart to promote coronary blood vessel sprouting. Plays a role in placental vascular development; promotes placental trophoblast invasion and spiral artery remodeling in the uterus. Involved in the regulation of maternal cardiovascular homeostasis to prevent gestational hypertension and for potent cardioprotective functions during heart failure. Mediates myocardial contractility in an ERK1/2-dependent manner. This is Apelin receptor early endogenous ligand from Mus musculus (Mouse).